The following is a 541-amino-acid chain: Membrane protein insertase YidC (541 aa).

Transmembrane regions (helical) follow at residues 6-26, 326-346, 349-369, 420-440, 457-477, and 500-520; these read NLLL…WESD, VVDY…LMFF, LVHN…GLLY, GGCL…WVLL, LSVQ…MWAM, and MIFT…WLVG.

It belongs to the OXA1/ALB3/YidC family. Type 1 subfamily. As to quaternary structure, interacts with the Sec translocase complex via SecD. Specifically interacts with transmembrane segments of nascent integral membrane proteins during membrane integration.

It is found in the cell inner membrane. In terms of biological role, required for the insertion and/or proper folding and/or complex formation of integral membrane proteins into the membrane. Involved in integration of membrane proteins that insert both dependently and independently of the Sec translocase complex, as well as at least some lipoproteins. Aids folding of multispanning membrane proteins. This Shewanella amazonensis (strain ATCC BAA-1098 / SB2B) protein is Membrane protein insertase YidC.